The primary structure comprises 193 residues: Dirigent protein 11 (193 aa).

The signal sequence occupies residues Met1 to Ser33. N-linked (GlcNAc...) asparagine glycosylation is found at Asn78 and Asn136.

It belongs to the plant dirigent protein family. As to quaternary structure, homodimer.

It is found in the secreted. The protein resides in the extracellular space. The protein localises to the apoplast. Dirigent proteins impart stereoselectivity on the phenoxy radical-coupling reaction, yielding optically active lignans from two molecules of coniferyl alcohol in the biosynthesis of lignans, flavonolignans, and alkaloids and thus plays a central role in plant secondary metabolism. In Arabidopsis thaliana (Mouse-ear cress), this protein is Dirigent protein 11 (DIR11).